The sequence spans 365 residues: Ribosomal RNA large subunit methyltransferase F (365 aa).

A disordered region spans residues Met1 to Ala50. Over residues Ala33–Ala50 the composition is skewed to basic and acidic residues.

This sequence belongs to the methyltransferase superfamily. METTL16/RlmF family.

It is found in the cytoplasm. It catalyses the reaction adenosine(1618) in 23S rRNA + S-adenosyl-L-methionine = N(6)-methyladenosine(1618) in 23S rRNA + S-adenosyl-L-homocysteine + H(+). Functionally, specifically methylates the adenine in position 1618 of 23S rRNA. The sequence is that of Ribosomal RNA large subunit methyltransferase F from Shewanella baltica (strain OS155 / ATCC BAA-1091).